The chain runs to 412 residues: Double C2-like domain-containing protein beta (412 aa).

Residues 1–36 (MTLRRRGEKATISIQEHMAIDVCPGPIRPIKQISDY) form a negatively regulates targeting to plasma membrane region. The tract at residues 1–90 (MTLRRRGEKA…EDVDQLFGAY (90 aa)) is mediates interaction with DYNLT1. Residues 38–123 (PRFPRGLPPT…PDVDGYESDD (86 aa)) are disordered. Over residues 43–58 (GLPPTAAPRAPAPPDA) the composition is skewed to pro residues. Positions 59–74 (PARSPAASASPRSPSD) are enriched in low complexity. Over residues 95-108 (GPSPGPSPARPPAK) the composition is skewed to pro residues. The segment covering 112–123 (DEPDVDGYESDD) has biased composition (acidic residues). 2 consecutive C2 domains span residues 126–250 (ALGT…SICL) and 266–399 (ERGR…ERWH). 9 residues coordinate Ca(2+): Asp-157, Asp-163, Asp-218, Asp-220, Asp-297, Asp-303, Asp-357, Asp-359, and Asp-365. The tract at residues 257–375 (DKAEDKSLEE…FIGGVVLGIN (119 aa)) is mediates interaction with STXBP3. Position 411 is a phosphoserine (Ser-411).

In terms of assembly, interacts with cytoplasmic dynein light chain DYNLT1. May interact with UNC13A; the interaction mediates targeting to the plasma membrane. Probably interacts with the SNARE (soluble N-ethylmaleimide-sensitive factor attached protein receptor) complex composed of SNAP25, STX1A and VAMP2; the interaction is calcium-dependent and competitive with SYT1. Interacts with STX4; the interaction is calcium-dependent, increased by insulin and glucose, and mediates vesicle fusion with plasma membrane in pancreatic cells and adipocytes. Interacts with STXBP3; the interaction is direct, occurs at the cell membrane and regulates glucose-stimulated insulin secretion. The cofactor is Ca(2+). In terms of tissue distribution, widely expressed. Expressed in pancreatic islet cells (at protein level).

The protein resides in the cytoplasm. Its subcellular location is the cytoplasmic granule. It localises to the cell membrane. Calcium sensor which positively regulates SNARE-dependent fusion of vesicles with membranes. Binds phospholipids in a calcium-dependent manner and may act at the priming stage of fusion by modifying membrane curvature to stimulate fusion. Involved in calcium-triggered exocytosis in chromaffin cells and calcium-dependent spontaneous release of neurotransmitter in absence of action potentials in neuronal cells. Involved both in glucose-stimulated insulin secretion in pancreatic cells and insulin-dependent GLUT4 transport to the plasma membrane in adipocytes. The polypeptide is Double C2-like domain-containing protein beta (Doc2b) (Mus musculus (Mouse)).